The primary structure comprises 407 residues: FMN-dependent alpha-hydroxy acid dehydrogenase PB1A11.03 (407 aa).

In terms of domain architecture, FMN hydroxy acid dehydrogenase spans 28 to 406 (QRPQITVDGR…DLNRDVLYKE (379 aa)). An a 2-oxocarboxylate-binding site is contributed by tyrosine 54. FMN contacts are provided by serine 136 and glutamine 158. Residue tyrosine 160 coordinates a 2-oxocarboxylate. An FMN-binding site is contributed by threonine 188. Residue arginine 197 coordinates a 2-oxocarboxylate. FMN is bound at residue lysine 277. Histidine 301 (proton acceptor) is an active-site residue. Arginine 304 is a binding site for a 2-oxocarboxylate. FMN contacts are provided by residues 332 to 336 (DSGVR) and 355 to 356 (GR).

The protein belongs to the FMN-dependent alpha-hydroxy acid dehydrogenase family. FMN is required as a cofactor.

It localises to the cytoplasm. The protein localises to the nucleus. This Schizosaccharomyces pombe (strain 972 / ATCC 24843) (Fission yeast) protein is FMN-dependent alpha-hydroxy acid dehydrogenase PB1A11.03.